Here is a 97-residue protein sequence, read N- to C-terminus: MTEGADMARTSRPPVTIASDTLDRLERLAEGAMARNPDLADRLLTELGPRPVPAARADARGCSPASERGHLSRTRPPGASRTVVLVLPEDADIGRRA.

Disordered stretches follow at residues 1–20 (MTEG…IASD) and 52–97 (VPAA…GRRA).

This is an uncharacterized protein from Paracoccus pantotrophus (Thiosphaera pantotropha).